The following is a 548-amino-acid chain: Chaperonin GroEL (548 aa).

Residues 30–33 (TLGP), K51, 87–91 (DGTTT), G415, 479–481 (NAA), and D495 contribute to the ATP site.

The protein belongs to the chaperonin (HSP60) family. As to quaternary structure, forms a cylinder of 14 subunits composed of two heptameric rings stacked back-to-back. Interacts with the co-chaperonin GroES.

Its subcellular location is the cytoplasm. The enzyme catalyses ATP + H2O + a folded polypeptide = ADP + phosphate + an unfolded polypeptide.. Its function is as follows. Together with its co-chaperonin GroES, plays an essential role in assisting protein folding. The GroEL-GroES system forms a nano-cage that allows encapsulation of the non-native substrate proteins and provides a physical environment optimized to promote and accelerate protein folding. This Salmonella gallinarum (strain 287/91 / NCTC 13346) protein is Chaperonin GroEL.